Consider the following 322-residue polypeptide: Homeobox protein DBX1-B (322 aa).

The homeobox DNA-binding region spans 179 to 238 (GMLRRAVFSDVQRKALEKMFQKQKYISKPDRKKLATKLGLKDSQVKIWFQNRRMKWRNSK). 2 disordered regions span residues 238 to 266 (KERE…LSDV) and 296 to 322 (DLHF…ITVS). Residues 312–322 (SESEDEEITVS) are compositionally biased toward acidic residues.

It belongs to the H2.0 homeobox family.

The protein resides in the nucleus. The protein is Homeobox protein DBX1-B (dbx1b) of Danio rerio (Zebrafish).